The following is a 147-amino-acid chain: UPF0306 protein YhbP (147 aa).

The protein belongs to the UPF0306 family.

This is UPF0306 protein YhbP from Escherichia coli O1:K1 / APEC.